The primary structure comprises 317 residues: L-lactate dehydrogenase (317 aa).

Residues V17, D38, K43, Y69, and 83-84 each bind NAD(+); that span reads GA. Q86 and R92 together coordinate substrate. NAD(+)-binding positions include S105, 122 to 124, and S147; that span reads ATN. 124 to 127 is a binding site for substrate; sequence NPVD. 152–155 contributes to the substrate binding site; that stretch reads DSAR. The beta-D-fructose 1,6-bisphosphate site is built by R157 and H172. H179 (proton acceptor) is an active-site residue. Y224 carries the post-translational modification Phosphotyrosine. T233 serves as a coordination point for substrate.

It belongs to the LDH/MDH superfamily. LDH family. As to quaternary structure, homotetramer.

It is found in the cytoplasm. It carries out the reaction (S)-lactate + NAD(+) = pyruvate + NADH + H(+). The protein operates within fermentation; pyruvate fermentation to lactate; (S)-lactate from pyruvate: step 1/1. Allosterically activated by fructose 1,6-bisphosphate (FBP). Catalyzes the conversion of lactate to pyruvate. This Bacillus velezensis (strain DSM 23117 / BGSC 10A6 / LMG 26770 / FZB42) (Bacillus amyloliquefaciens subsp. plantarum) protein is L-lactate dehydrogenase.